Here is a 192-residue protein sequence, read N- to C-terminus: Threonylcarbamoyl-AMP synthase (192 aa).

The YrdC-like domain occupies 5–192; the sequence is TTSVAEAAHC…DATTGRVIRD (188 aa).

It belongs to the SUA5 family. TsaC subfamily.

The protein resides in the cytoplasm. It catalyses the reaction L-threonine + hydrogencarbonate + ATP = L-threonylcarbamoyladenylate + diphosphate + H2O. Its function is as follows. Required for the formation of a threonylcarbamoyl group on adenosine at position 37 (t(6)A37) in tRNAs that read codons beginning with adenine. Catalyzes the conversion of L-threonine, HCO(3)(-)/CO(2) and ATP to give threonylcarbamoyl-AMP (TC-AMP) as the acyladenylate intermediate, with the release of diphosphate. The protein is Threonylcarbamoyl-AMP synthase of Acinetobacter baylyi (strain ATCC 33305 / BD413 / ADP1).